Reading from the N-terminus, the 323-residue chain is DNA-directed RNA polymerase subunit alpha (323 aa).

An alpha N-terminal domain (alpha-NTD) region spans residues 1–225 (MLDIAMPKIE…QYSQTIADFN (225 aa)). Residues 243-323 (PADIYDTPIE…TNSSPAGIES (81 aa)) are alpha C-terminal domain (alpha-CTD).

Belongs to the RNA polymerase alpha chain family. Homodimer. The RNAP catalytic core consists of 2 alpha, 1 beta, 1 beta' and 1 omega subunit. When a sigma factor is associated with the core the holoenzyme is formed, which can initiate transcription.

It catalyses the reaction RNA(n) + a ribonucleoside 5'-triphosphate = RNA(n+1) + diphosphate. Its function is as follows. DNA-dependent RNA polymerase catalyzes the transcription of DNA into RNA using the four ribonucleoside triphosphates as substrates. The protein is DNA-directed RNA polymerase subunit alpha of Roseiflexus castenholzii (strain DSM 13941 / HLO8).